Here is a 173-residue protein sequence, read N- to C-terminus: MNAADISRAPPGYLEVAWIADTCKLLMGLGWTTNYAGMIYKSLKDRTYGMALMPLCCNFAWELTYAVIYPFGSRQDKFTHYFGLMLNCGVMYTAVKNAEREWTHAPLVRRNLPFIFIICIAAWTTAHLALALQIGPSHAQAFSAYGCQLLLSVGALCQLLSRGSSRGASYFLW.

Transmembrane regions (helical) follow at residues 11–31 (PGYL…GLGW), 51–71 (ALMP…IYPF), 112–132 (LPFI…ALAL), and 141–161 (AFSA…QLLS).

Belongs to the paxB family.

Its subcellular location is the membrane. It participates in secondary metabolite biosynthesis; terpenoid biosynthesis. Its function is as follows. Terpene cyclase; part of the gene cluster that mediates the biosynthesis of the immunosuppressants subglutinols, meroterpenoids consisting of an alpha-pyrone (4-hydroxy-5,6-dimethyl-2-pyrone) moiety attached to a decalin core fused to a five-membered cyclic ether carrying a prenylside chain. The first step of the pathway is the synthesis of the alpha-pyrone moiety by the polyketide synthase subA via condensation of one acetyl-CoA starter unit with 3 malonyl-CoA units and 2 methylations. The alpha-pyrone is then combined with geranylgeranyl pyrophosphate (GGPP) formed by the GGPP synthase subD through the action of the prenyltransferase subC to yield a linear alpha-pyrone diterpenoid. Subsequent steps in the subglutinol biosynthetic pathway involve the decalin core formation, which is thought to be initiated by the epoxidation of the C10-C11 olefin by the FAD-dependent oxidoreductase subE. The following cyclization cascade would be catalyzed by the terpene cyclase subB. Lastly, the FAD-dependent dehydrogenase subF probably catalyzes the five-membered cyclic ether formation to complete the formation of subglutinol A. Subsequent redox reactions appear to give rise to subglutinol C and D, however, it remains unclear which enzymes are responsible for these transformations. SubD may have secondary function in the conversion of the identified subglutinols to subglutinol analog 45, which seems to be the major product of the cluster. This Metarhizium robertsii (strain ARSEF 23 / ATCC MYA-3075) (Metarhizium anisopliae (strain ARSEF 23)) protein is Terpene cyclase subB.